A 398-amino-acid chain; its full sequence is Argininosuccinate synthase (398 aa).

10-18 (AYSGGLDTS) is an ATP binding site. Y87 is an L-citrulline binding site. ATP is bound at residue G117. Residues T119, N123, and D124 each contribute to the L-aspartate site. Residue N123 participates in L-citrulline binding. Positions 127, 175, 260, and 272 each coordinate L-citrulline.

The protein belongs to the argininosuccinate synthase family. Type 1 subfamily. As to quaternary structure, homotetramer.

The protein resides in the cytoplasm. It carries out the reaction L-citrulline + L-aspartate + ATP = 2-(N(omega)-L-arginino)succinate + AMP + diphosphate + H(+). It participates in amino-acid biosynthesis; L-arginine biosynthesis; L-arginine from L-ornithine and carbamoyl phosphate: step 2/3. The sequence is that of Argininosuccinate synthase from Lactococcus lactis subsp. lactis (strain IL1403) (Streptococcus lactis).